Consider the following 515-residue polypeptide: Ent-isokaurene C2/C3-hydroxylase (515 aa).

Residues 5–25 (LILDLCLSALFVVVLSKLVSS) traverse the membrane as a helical segment. Cysteine 452 contacts heme.

Belongs to the cytochrome P450 family. Heme is required as a cofactor.

The protein localises to the membrane. It catalyses the reaction ent-isokaurene + 2 reduced [NADPH--hemoprotein reductase] + 2 O2 = ent-isokaurene-2beta,3beta-diol + 2 oxidized [NADPH--hemoprotein reductase] + 2 H2O + 2 H(+). Its function is as follows. Enzyme of the diterpenoid metabolism involved in the biosynthesis of antibacterial oryzalides such as phytocassane. The chain is Ent-isokaurene C2/C3-hydroxylase (CYP71Z6) from Oryza sativa subsp. japonica (Rice).